The chain runs to 249 residues: Uridylate kinase (249 aa).

Position 19-22 (19-22 (KLSG)) interacts with ATP. Residue Gly-61 participates in UMP binding. Residues Gly-62 and Arg-66 each coordinate ATP. Residues Asp-81 and 142 to 149 (TGNPYFTT) contribute to the UMP site. 3 residues coordinate ATP: Thr-169, Tyr-175, and Asp-178.

Belongs to the UMP kinase family. In terms of assembly, homohexamer.

The protein localises to the cytoplasm. It carries out the reaction UMP + ATP = UDP + ADP. The protein operates within pyrimidine metabolism; CTP biosynthesis via de novo pathway; UDP from UMP (UMPK route): step 1/1. With respect to regulation, inhibited by UTP. Functionally, catalyzes the reversible phosphorylation of UMP to UDP. This Anaeromyxobacter sp. (strain Fw109-5) protein is Uridylate kinase.